The following is a 199-amino-acid chain: uncharacterized protein (199 aa).

4 consecutive transmembrane segments (helical) span residues 40-60 (LLIC…FCFL), 86-106 (VLTG…TFPF), 117-137 (TSWP…LTSS), and 166-186 (FLLA…ALIL).

It is found in the membrane. This is an uncharacterized protein from Saccharomyces cerevisiae (strain ATCC 204508 / S288c) (Baker's yeast).